Here is a 267-residue protein sequence, read N- to C-terminus: 4-hydroxy-tetrahydrodipicolinate reductase (267 aa).

Residues 9-14 and Asp-35 each bind NAD(+); that span reads GAAGRM. Arg-36 contributes to the NADP(+) binding site. NAD(+) is bound by residues 99–101 and 123–126; these read GTT and APNY. The Proton donor/acceptor role is filled by His-156. His-157 contacts (S)-2,3,4,5-tetrahydrodipicolinate. The Proton donor role is filled by Lys-160. 166 to 167 serves as a coordination point for (S)-2,3,4,5-tetrahydrodipicolinate; sequence GT.

The protein belongs to the DapB family.

The protein resides in the cytoplasm. The catalysed reaction is (S)-2,3,4,5-tetrahydrodipicolinate + NAD(+) + H2O = (2S,4S)-4-hydroxy-2,3,4,5-tetrahydrodipicolinate + NADH + H(+). It carries out the reaction (S)-2,3,4,5-tetrahydrodipicolinate + NADP(+) + H2O = (2S,4S)-4-hydroxy-2,3,4,5-tetrahydrodipicolinate + NADPH + H(+). The protein operates within amino-acid biosynthesis; L-lysine biosynthesis via DAP pathway; (S)-tetrahydrodipicolinate from L-aspartate: step 4/4. Functionally, catalyzes the conversion of 4-hydroxy-tetrahydrodipicolinate (HTPA) to tetrahydrodipicolinate. The sequence is that of 4-hydroxy-tetrahydrodipicolinate reductase from Alkalilimnicola ehrlichii (strain ATCC BAA-1101 / DSM 17681 / MLHE-1).